The chain runs to 282 residues: Pantothenate synthetase (282 aa).

30-37 is a binding site for ATP; sequence MGYYHAGH. The active-site Proton donor is the histidine 37. Position 61 (glutamine 61) interacts with (R)-pantoate. Glutamine 61 is a beta-alanine binding site. ATP is bound at residue 147 to 150; it reads GQKD. Glutamine 153 lines the (R)-pantoate pocket. Residues valine 176 and 184-187 contribute to the ATP site; that span reads LSSR.

It belongs to the pantothenate synthetase family. Homodimer.

The protein resides in the cytoplasm. The enzyme catalyses (R)-pantoate + beta-alanine + ATP = (R)-pantothenate + AMP + diphosphate + H(+). Its pathway is cofactor biosynthesis; (R)-pantothenate biosynthesis; (R)-pantothenate from (R)-pantoate and beta-alanine: step 1/1. Catalyzes the condensation of pantoate with beta-alanine in an ATP-dependent reaction via a pantoyl-adenylate intermediate. This Desulfovibrio desulfuricans (strain ATCC 27774 / DSM 6949 / MB) protein is Pantothenate synthetase.